The sequence spans 1381 residues: Hepatocyte growth factor receptor (1381 aa).

Positions 1 to 24 are cleaved as a signal peptide; the sequence is MKALAVLGPGLLVHLLTLVQKSGG. The Extracellular portion of the chain corresponds to 25–932; that stretch reads ECKEALVKSA…VIVQPDQNFT (908 aa). One can recognise a Sema domain in the interval 27 to 515; it reads KEALVKSAMN…TGKTITKIPL (489 aa). N-linked (GlcNAc...) asparagine glycosylation is found at Asn-45 and Asn-74. 6 disulfide bridges follow: Cys-95–Cys-101, Cys-98–Cys-159, Cys-133–Cys-141, Cys-172–Cys-175, Cys-298–Cys-363, and Cys-385–Cys-397. N-linked (GlcNAc...) asparagine glycosylation occurs at Asn-106. The N-linked (GlcNAc...) asparagine glycan is linked to Asn-358. The N-linked (GlcNAc...) asparagine glycan is linked to Asn-399. Disulfide bonds link Cys-520/Cys-538, Cys-526/Cys-561, Cys-529/Cys-545, and Cys-541/Cys-551. IPT/TIG domains are found at residues 563-655, 657-739, and 742-836; these read PTIY…FSYV, PIIT…FNYR, and PIVD…LIYV. Thr-582 is a glycosylation site (O-linked (Man) threonine). N-linked (GlcNAc...) asparagine glycosylation is found at Asn-607 and Asn-635. 2 O-linked (Man) threonine glycosylation sites follow: Thr-676 and Thr-761. N-linked (GlcNAc...) asparagine glycans are attached at residues Asn-785, Asn-879, and Asn-930. A helical transmembrane segment spans residues 933-955; sequence GLIVGVISISVLLSLLFGLFLWL. Over 956 to 1381 the chain is Cytoplasmic; sequence KRRKQIKDLG…QDHVDGEGDT (426 aa). A Phosphoserine modification is found at Ser-966. Thr-977 is modified (phosphothreonine). 3 positions are modified to phosphoserine: Ser-990, Ser-997, and Ser-1000. At Tyr-1003 the chain carries Phosphotyrosine. The Protein kinase domain occupies 1078–1345; the sequence is VHFNEVIGRG…RISAIFSAFI (268 aa). ATP is bound by residues 1084 to 1092 and Lys-1110; that span reads IGRGHFGCV. Catalysis depends on Asp-1204, which acts as the Proton acceptor. An interaction with RANBP9 region spans residues 1212–1381; sequence LDENFTVKVA…QDHVDGEGDT (170 aa). Phosphotyrosine is present on Tyr-1230. A phosphotyrosine; by autocatalysis mark is found at Tyr-1234 and Tyr-1235. Thr-1289 is subject to Phosphothreonine. An interaction with MUC20 region spans residues 1320-1359; that stretch reads WHPKAEQRPSFAELVSRISAIFSAFIGEHYVHVNATYVNV. A phosphotyrosine; by autocatalysis mark is found at Tyr-1349 and Tyr-1356. Residue Tyr-1365 is modified to Phosphotyrosine.

The protein belongs to the protein kinase superfamily. Tyr protein kinase family. As to quaternary structure, heterodimer made of an alpha chain (50 kDa) and a beta chain (145 kDa) which are disulfide linked. Binds PLXNB1. Interacts when phosphorylated with downstream effectors including STAT3, PIK3R1, SRC, PCLG1, GRB2 and GAB1. Interacts with SPSB1, SPSB2 and SPSB4. Interacts with INPP5D/SHIP1. When phosphorylated at Tyr-1356, interacts with INPPL1/SHIP2. Interacts with RANBP9 and RANBP10, as well as SPSB1, SPSB2, SPSB3 and SPSB4. SPSB1 binding occurs in the presence and in the absence of HGF, however HGF treatment has a positive effect on this interaction. Interacts with MUC20; prevents interaction with GRB2 and suppresses hepatocyte growth factor-induced cell proliferation. Interacts with GRB10. Interacts with PTPN1 and PTPN2. Interacts with HSP90AA1 and HSP90AB1; the interaction suppresses MET kinase activity. Interacts with tensin TNS3. Interacts (when phosphorylated) with tensin TNS4 (via SH2 domain); the interaction increases MET protein stability by inhibiting MET endocytosis and subsequent lysosomal degradation. Post-translationally, autophosphorylated in response to ligand binding on Tyr-1234 and Tyr-1235 in the kinase domain leading to further phosphorylation of Tyr-1349 and Tyr-1356 in the C-terminal multifunctional docking site. Dephosphorylated by PTPRJ at Tyr-1349 and Tyr-1365. Dephosphorylated by PTPN1 and PTPN2. Ubiquitinated. Ubiquitination by CBL regulates the receptor stability and activity through proteasomal degradation. In terms of processing, O-mannosylation of IPT/TIG domains by TMEM260 is required for protein maturation. O-mannosylated residues are composed of single mannose glycans that are not elongated or modified.

Its subcellular location is the membrane. The enzyme catalyses L-tyrosyl-[protein] + ATP = O-phospho-L-tyrosyl-[protein] + ADP + H(+). In its inactive state, the C-terminal tail interacts with the catalytic domain and inhibits the kinase activity. Upon ligand binding, the C-terminal tail is displaced and becomes phosphorylated, thus increasing the kinase activity. Receptor tyrosine kinase that transduces signals from the extracellular matrix into the cytoplasm by binding to hepatocyte growth factor/HGF ligand. Regulates many physiological processes including proliferation, scattering, morphogenesis and survival. Ligand binding at the cell surface induces autophosphorylation of MET on its intracellular domain that provides docking sites for downstream signaling molecules. Following activation by ligand, interacts with the PI3-kinase subunit PIK3R1, PLCG1, SRC, GRB2, STAT3 or the adapter GAB1. Recruitment of these downstream effectors by MET leads to the activation of several signaling cascades including the RAS-ERK, PI3 kinase-AKT, or PLCgamma-PKC. The RAS-ERK activation is associated with the morphogenetic effects while PI3K/AKT coordinates prosurvival effects. During embryonic development, MET signaling plays a role in gastrulation, development and migration of muscles and neuronal precursors, angiogenesis and kidney formation. In adults, participates in wound healing as well as organ regeneration and tissue remodeling. Also promotes differentiation and proliferation of hematopoietic cells. The sequence is that of Hepatocyte growth factor receptor (MET) from Rhinolophus ferrumequinum (Greater horseshoe bat).